We begin with the raw amino-acid sequence, 260 residues long: Carbonic anhydrase 2 (260 aa).

Serine 2 bears the N-acetylserine mark. At serine 2 the chain carries Phosphoserine. The Alpha-carbonic anhydrase domain occupies 3 to 259 (HHWGYSKHNG…LKNRKIKASF (257 aa)). Histidine 64 acts as the Proton acceptor in catalysis. The active site involves asparagine 67. Serine 87 is modified (phosphoserine). Zn(2+)-binding residues include histidine 94, histidine 96, and histidine 119. Tyrosine 127 is an active-site residue. At serine 165 the chain carries Phosphoserine. A substrate-binding site is contributed by 198-199 (TT).

The protein belongs to the alpha-carbonic anhydrase family. Interacts with SLC4A4. Interaction with SLC4A7 regulates SLC4A7 transporter activity. Interacts with SLC26A6. It depends on Zn(2+) as a cofactor.

It localises to the cytoplasm. The protein resides in the cell membrane. It carries out the reaction hydrogencarbonate + H(+) = CO2 + H2O. The catalysed reaction is urea = cyanamide + H2O. Its activity is regulated as follows. Inhibited by acetazolamide. In terms of biological role, catalyzes the reversible hydration of carbon dioxide. Can also hydrate cyanamide to urea. Involved in the regulation of fluid secretion into the anterior chamber of the eye. Essential for bone resorption and osteoclast differentiation. Contributes to intracellular pH regulation in the duodenal upper villous epithelium during proton-coupled peptide absorption. Stimulates the chloride-bicarbonate exchange activity of SLC26A6. The sequence is that of Carbonic anhydrase 2 (Ca2) from Mus musculus (Mouse).